A 60-amino-acid chain; its full sequence is Single-pass membrane and coiled-coil domain-containing protein 4 homolog (60 aa).

Residues 1 to 21 (MRKLRGGQTKETRKQKQERRE) form a disordered region. The segment covering 8-21 (QTKETRKQKQERRE) has biased composition (basic and acidic residues). The stretch at 10 to 33 (KETRKQKQERREENLKIQQQLKTI) forms a coiled coil. Residues 32–52 (TIVLPICGVFLMCIVVYVFLK) form a helical membrane-spanning segment.

It belongs to the SMCO4 family.

It is found in the membrane. In Aedes aegypti (Yellowfever mosquito), this protein is Single-pass membrane and coiled-coil domain-containing protein 4 homolog.